A 665-amino-acid polypeptide reads, in one-letter code: Prelamin-A/C (665 aa).

N-acetylmethionine is present on Met-1. The disordered stretch occupies residues 1–25 (METPSQRRATRSGAQASSTPLSPTR). The interval 1–33 (METPSQRRATRSGAQASSTPLSPTRITRLQEKE) is head. Residues 1 to 130 (METPSQRRAT…TKKEGDLLAA (130 aa)) are interaction with MLIP. Thr-3 is subject to Phosphothreonine. Ser-5 carries the post-translational modification Phosphoserine. Thr-10 bears the Phosphothreonine mark. Phosphoserine is present on residues Ser-12 and Ser-18. Thr-19 is subject to Phosphothreonine. The residue at position 22 (Ser-22) is a Phosphoserine. The IF rod domain maps to 31–387 (EKEDLQELND…KLLEGEEERL (357 aa)). Lys-32 bears the N6-acetyllysine; alternate mark. N6-succinyllysine; alternate is present on Lys-32. Lys-32 participates in a covalent cross-link: Glycyl lysine isopeptide (Lys-Gly) (interchain with G-Cter in SUMO2); alternate. The tract at residues 34-70 (DLQELNDRLAVYIDRVRSLETENAGLRLRITESEEVV) is coil 1A. Residues Ser-51, Ser-66, and Ser-71 each carry the phosphoserine modification. A linker 1 region spans residues 71-80 (SREVSGIKAA). Lys-78 and Lys-97 each carry N6-acetyllysine. Residues 81–218 (YEAELGDARK…NIYSEELRET (138 aa)) form a coil 1B region. Residue Lys-97 forms a Glycyl lysine isopeptide (Lys-Gly) (interchain with G-Cter in SUMO2) linkage. Residue Ser-107 is modified to Phosphoserine. Lys-108, Lys-114, Lys-123, Lys-135, Lys-144, and Lys-155 each carry N6-acetyllysine. Lys-171 bears the N6-acetyllysine; alternate mark. Lys-171 carries the N6-succinyllysine; alternate modification. Lys-171 participates in a covalent cross-link: Glycyl lysine isopeptide (Lys-Gly) (interchain with G-Cter in SUMO2); alternate. 3 positions are modified to N6-acetyllysine: Lys-180, Lys-201, and Lys-208. Lys-201 participates in a covalent cross-link: Glycyl lysine isopeptide (Lys-Gly) (interchain with G-Cter in SUMO2); alternate. A Glycyl lysine isopeptide (Lys-Gly) (interchain with G-Cter in SUMO); alternate cross-link involves residue Lys-201. Lys-208 participates in a covalent cross-link: Glycyl lysine isopeptide (Lys-Gly) (interchain with G-Cter in SUMO2). Ser-212 carries the post-translational modification Phosphoserine. Residues Lys-219 and Lys-233 each participate in a glycyl lysine isopeptide (Lys-Gly) (interchain with G-Cter in SUMO2) cross-link. Residues 219–242 (KRRHETRLVEIDNGKQREFESRLA) are linker 2. Residues Lys-233, Lys-260, Lys-265, and Lys-270 each carry the N6-acetyllysine modification. The coil 2 stretch occupies residues 243-383 (DALQELRAQH…HAYRKLLEGE (141 aa)). Residue Lys-260 forms a Glycyl lysine isopeptide (Lys-Gly) (interchain with G-Cter in SUMO2); alternate linkage. Lys-270 participates in a covalent cross-link: Glycyl lysine isopeptide (Lys-Gly) (interchain with G-Cter in SUMO2); alternate. Phosphoserine occurs at positions 277, 282, 301, and 307. A Glycyl lysine isopeptide (Lys-Gly) (interchain with G-Cter in SUMO2); alternate cross-link involves residue Lys-311. N6-acetyllysine occurs at positions 311, 316, and 341. Glycyl lysine isopeptide (Lys-Gly) (interchain with G-Cter in SUMO2) cross-links involve residues Lys-366 and Lys-378. The segment at 384–442 (EERLRLSPSPTSQRSRGRASSHSSQSQGGGSVTKKRKLESSESRSSFSQHARTSGRVAV) is disordered. Residues 384 to 665 (EERLRLSPSP…SQSSQNCSIM (282 aa)) are tail. Phosphoserine occurs at positions 390, 392, 395, 398, 403, 404, 406, 407, 409, and 414. At Ser-392 the chain carries Phosphoserine; by CDK1. The span at 395 to 409 (SQRSRGRASSHSSQS) shows a compositional bias: low complexity. Thr-416 carries the phosphothreonine modification. An N6-acetyllysine mark is found at Lys-417 and Lys-420. Residues Lys-417 and Lys-420 each participate in a glycyl lysine isopeptide (Lys-Gly) (interchain with G-Cter in SUMO2) cross-link. Positions 417-422 (KKRKLE) match the Nuclear localization signal motif. A phosphoserine mark is found at Ser-423, Ser-426, Ser-429, and Ser-431. The LTD domain occupies 428-545 (SSFSQHARTS…EEVAMRKLVR (118 aa)). Lys-450 is covalently cross-linked (Glycyl lysine isopeptide (Lys-Gly) (interchain with G-Cter in SUMO2); alternate). Lys-450 and Lys-457 each carry N6-acetyllysine. Residues Ser-458, Glu-460, and Ser-463 each carry the phosphoserine modification. An N6-acetyllysine modification is found at Lys-486. Lys-486 participates in a covalent cross-link: Glycyl lysine isopeptide (Lys-Gly) (interchain with G-Cter in SUMO2). The residue at position 496 (Thr-496) is a Phosphothreonine. Ser-500 carries the post-translational modification Phosphoserine. A phosphothreonine mark is found at Thr-505 and Thr-510. Residues Ser-533 and Ser-546 each carry the phosphoserine modification. Thr-548 bears the Phosphothreonine mark. A disordered region spans residues 553–577 (NEDDDEDGEELLHHHRGSHCSGSGD). Phosphoserine is present on residues Ser-570, Cys-572, and Ser-573. Residue Lys-599 forms a Glycyl lysine isopeptide (Lys-Gly) (interchain with G-Cter in SUMO2); alternate linkage. Lys-599 is covalently cross-linked (Glycyl lysine isopeptide (Lys-Gly) (interchain with G-Cter in SUMO1); alternate). Phosphoserine is present on residues Ser-613, Ser-614, Ser-617, and Ser-620. 2 O-linked (GlcNAc) serine glycosylation sites follow: Ser-626 and Ser-629. 4 positions are modified to phosphoserine: Ser-629, Ser-633, Ser-637, and Ser-653. Positions 648–662 (LLGNSSPRSQSSQNC) are cleaved as a propeptide — removed in Lamin-A/C form. At Cys-662 the chain carries Cysteine methyl ester. Cys-662 carries S-farnesyl cysteine lipidation. Positions 663-665 (SIM) are cleaved as a propeptide — removed in Prelamin-A/C form and in Lamin-A/C form.

Belongs to the intermediate filament family. Homodimer of lamin A and lamin C. Lamin dimers then assemble into dimeric head-to-tail polymers. Ultimately, two head-to-tail polymers assemble laterally into a protofilament with a uniformly shaped rod of 3.5 nm in diameter. Interacts with lamin-associated polypeptides IA, IB and TMPO-alpha, RB1 and with emerin. Proteolytically processed isoform A interacts with NARF. Interacts with SREBF1, SREBF2, SUN1, SUN2 and TMEM43. Interacts with TMEM201. Prelamin-A/C interacts with EMD. Interacts with DMPK; may regulate nuclear envelope stability. Interacts with MLIP. Interacts with SUV39H1; the interaction increases stability of SUV39H1. Interacts with ITSN1 isoform 2. Interacts with IFFO1; the interaction forms an interior nucleoskeleton and the recruitment to DNA double-strand breaks. In terms of assembly, interacts with EMD. As to quaternary structure, interacts (via C-terminus) with LEMD2 (via N-terminus) (in vitro). In terms of processing, proteolytic cleavage of the C-terminal of 18 residues of prelamin-A/C results in the production of lamin-A/C. The prelamin-A/C maturation pathway includes farnesylation of CAAX motif by protein farnesyltransferase (FNTA and FNTB), removal of the last three amino acids (-AAX) by RCE1/FACE2 and/or ZMPSTE24, methylation of the C-terminal cysteine by ICMT and endoproteolytic removal of the last 15 C-terminal amino acids by ZMPSTE24. Proteolytic cleavage requires prior farnesylation and methylation, and absence of these blocks cleavage. Post-translationally, farnesylation of prelamin-A/C facilitates nuclear envelope targeting. Phosphorylation plays a key role in lamin organization, subcellular localization and nuclear envelope disintegration. Phosphorylation by CDK1 at Ser-22 and Ser-392 at the onset of mitosis drives lamin disassembly and nuclear envelope breakdown. Phosphorylation at Ser-22 and Ser-392 during interphase promotes localization to the nucleoplasm and regulates lamina assembly. Phosphorylation at Ser-22, Ser-392 and Ser-629 during interphase causes redistribution between the nucleus and the cytoplasm. Phosphorylation at Ser-22 by CDK1 regulates matrix stiffness. Phosphorylation status of Ser-22 determines its localization between double-strand break (DSB) sites and the nuclear matrix. Phosphorylated by ATR at Ser-282 in response to DNA damage, leading to lamin disassembly and nuclear envelope rupture. Phosphorylation also regulates stability in micronuclei arising from genome instability: phosphorylation at Ser-395 by ATR in response to genome instability and double-stranded DNA breaks primes LMNA for subsequent phosphorylation at Ser-392 by CDK1 and micronuclei envelope rupture. The rupture of micronuclear envelope triggers the cGAS-STING pathway thereby activating the type I interferon response and innate immunity. In terms of processing, isoform C is phosphorylated on Ser-392, Ser-407 and Ser-409 at interphase. Post-translationally, acetylation by KAT8 is required for nuclear architecture. Sumoylation is necessary for the localization to the nuclear envelope. In terms of processing, the N-terminus is blocked. In terms of tissue distribution, expressed in liver and in bone marrow (at protein level). Expressed in cardiomyocytes. As to expression, specifically expressed in germ cells.

It is found in the nucleus lamina. It localises to the nucleus envelope. The protein localises to the nucleus. The protein resides in the nucleoplasm. Its subcellular location is the nucleus matrix. Its function is as follows. Lamins are intermediate filament proteins that assemble into a filamentous meshwork, and which constitute the major components of the nuclear lamina, a fibrous layer on the nucleoplasmic side of the inner nuclear membrane. Lamins provide a framework for the nuclear envelope, bridging the nuclear envelope and chromatin, thereby playing an important role in nuclear assembly, chromatin organization, nuclear membrane and telomere dynamics. Lamin A and C also regulate matrix stiffness by conferring nuclear mechanical properties. The structural integrity of the lamina is strictly controlled by the cell cycle, as seen by the disintegration and formation of the nuclear envelope in prophase and telophase, respectively. Lamin A and C are present in equal amounts in the lamina of mammals. Also invoved in DNA repair: recruited by DNA repair proteins XRCC4 and IFFO1 to the DNA double-strand breaks (DSBs) to prevent chromosome translocation by immobilizing broken DNA ends. Required for normal development of peripheral nervous system and skeletal muscle and for muscle satellite cell proliferation. Required for osteoblastogenesis and bone formation. Also prevents fat infiltration of muscle and bone marrow, helping to maintain the volume and strength of skeletal muscle and bone. Required for cardiac homeostasis. In terms of biological role, prelamin-A/C can accelerate smooth muscle cell senescence. It acts to disrupt mitosis and induce DNA damage in vascular smooth muscle cells (VSMCs), leading to mitotic failure, genomic instability, and premature senescence. Functionally, isoform C2 may have a role in determining the organization of nuclear and chromosomal structures during spermatogenesis. The protein is Prelamin-A/C (Lmna) of Mus musculus (Mouse).